The sequence spans 187 residues: MELGLTGKLLVAAPALAETFFERTVIYLCAHSEQDGAMGLIVNRRLSQPGLDDLFAQLGIEPSPPERRIGVCMGGPVEHARGFVLHSADWAGEGSLDVDGHTTLTASLDILREIAAGHGPRQAVMALGHAAWAPGQLEEEILRDSSWFIAPATDEIVFGTDHAKKWRQALVAIDFDPLLLSSSVGEA.

It belongs to the UPF0301 (AlgH) family.

This Gluconobacter oxydans (strain 621H) (Gluconobacter suboxydans) protein is UPF0301 protein GOX1459.